A 79-amino-acid polypeptide reads, in one-letter code: Hematopoietic cell signal transducer (79 aa).

A signal peptide spans 1 to 17 (MDPPGYLLFLLLLPVAA). Residues 18–35 (SQTSAGSCSGCGTLSLPL) are Extracellular-facing. A helical membrane pass occupies residues 36-56 (LAGLVAADAVMSLLIVGVVFV). Residues 57 to 79 (CMRPHGRPAQEDGRVYINMPGRG) are Cytoplasmic-facing. The residue at position 72 (Y72) is a Phosphotyrosine. The GRB2 binding site stretch occupies residues 72-74 (YIN). The tract at residues 72–75 (YINM) is PIK3R1 binding site.

The protein belongs to the DAP10 family. In terms of assembly, homodimer; Disulfide-linked. Interacts with KLRK1 to form a stable complex, which results in surface expression of both proteins, whereas alone, it is minimally expressed. Interacts with PIK3R1 and GRB2. Interacts with CLEC5A. Forms an CLEC5A/TYROBP/HCST trimolecular complex depending almost solely on TYROBP. Heterohexamer composed of four subunits of HCST/DAP10 and two subunits of KLRK1. Interacts (via transmembrane domain) with KLRK1 isoform 1 (via transmembrane domain); the interaction is required for KLRK1 cell surface expression on naive NK cells and activated CD8(+) T-cells, but is dispensable on activated TYROBP-expressing NK cells. Interacts (via transmembrane domain) with KLRK1 isoform 2 (via transmembrane domain); the interaction is required for KLRK1 NK cell surface expression and induces NK cell-mediated cytotoxicity. Interacts with CD300H. In terms of processing, phosphorylated; PIK3R1 and GRB2 associate specifically with tyrosine-phosphorylated HCST. O-glycosylated.

Its subcellular location is the membrane. Functionally, transmembrane adapter protein which associates with KLRK1 to form an activation receptor KLRK1-HCST in lymphoid and myeloid cells; this receptor plays a major role in triggering cytotoxicity against target cells expressing cell surface ligands such as MHC class I chain-related MICA and MICB, and UL16-binding proteins (ULBPs); these ligands are up-regulated by stress conditions and pathological state such as viral infection and tumor transformation. Functions as a docking site for PI3-kinase PIK3R1 and GRB2. Interaction of ULBPs with KLRK1-HCST triggers calcium mobilization and activation of the PIK3R1, MAP2K/ERK, and JAK2/STAT5 signaling pathways. Both PIK3R1 and GRB2 are required for full KLRK1-HCST-mediated activation and ultimate killing of target cells. In NK cells, KLRK1-HCST signaling directly induces cytotoxicity and enhances cytokine production initiated via DAP12/TYROBP-associated receptors. In T-cells, it provides primarily costimulation for TCR-induced signals. KLRK1-HCST receptor plays a role in immune surveillance against tumors and is required for cytolysis of tumors cells; indeed, melanoma cells that do not express KLRK1 ligands escape from immune surveillance mediated by NK cells. The protein is Hematopoietic cell signal transducer (Hcst) of Mus musculus (Mouse).